The following is a 236-amino-acid chain: Large ribosomal subunit protein uL3 (236 aa).

The segment at 215-236 is disordered; the sequence is PAPEPAAPVAAAAAGTGEEASA. The span at 221–236 shows a compositional bias: low complexity; sequence APVAAAAAGTGEEASA.

Belongs to the universal ribosomal protein uL3 family. As to quaternary structure, part of the 50S ribosomal subunit. Forms a cluster with proteins L14 and L19.

Functionally, one of the primary rRNA binding proteins, it binds directly near the 3'-end of the 23S rRNA, where it nucleates assembly of the 50S subunit. The sequence is that of Large ribosomal subunit protein uL3 from Parafrankia sp. (strain EAN1pec).